The chain runs to 337 residues: Protein FAM169B (337 aa).

Positions 278–326 (STVHPKCSEEDTDTPGQASQEDGPTQFNHGESHKEWAVGEPERTQNGRR) are disordered. Polar residues predominate over residues 291-306 (TPGQASQEDGPTQFNH). A compositionally biased stretch (basic and acidic residues) spans 307–322 (GESHKEWAVGEPERTQ).

The protein belongs to the FAM169 family.

This is Protein FAM169B (Fam169b) from Mus musculus (Mouse).